The chain runs to 180 residues: Small ribosomal subunit protein uS5 (180 aa).

The 64-residue stretch at 13-76 folds into the S5 DRBM domain; sequence LEERVVQINR…EAAKKNLIRV (64 aa).

Belongs to the universal ribosomal protein uS5 family. As to quaternary structure, part of the 30S ribosomal subunit. Contacts proteins S4 and S8.

Its function is as follows. With S4 and S12 plays an important role in translational accuracy. Located at the back of the 30S subunit body where it stabilizes the conformation of the head with respect to the body. The sequence is that of Small ribosomal subunit protein uS5 from Roseiflexus sp. (strain RS-1).